A 348-amino-acid polypeptide reads, in one-letter code: Tetraacyldisaccharide 4'-kinase (348 aa).

Val-65 to Thr-72 provides a ligand contact to ATP. The tract at residues Pro-89–Asp-117 is disordered.

The protein belongs to the LpxK family.

It catalyses the reaction a lipid A disaccharide + ATP = a lipid IVA + ADP + H(+). The protein operates within glycolipid biosynthesis; lipid IV(A) biosynthesis; lipid IV(A) from (3R)-3-hydroxytetradecanoyl-[acyl-carrier-protein] and UDP-N-acetyl-alpha-D-glucosamine: step 6/6. In terms of biological role, transfers the gamma-phosphate of ATP to the 4'-position of a tetraacyldisaccharide 1-phosphate intermediate (termed DS-1-P) to form tetraacyldisaccharide 1,4'-bis-phosphate (lipid IVA). This chain is Tetraacyldisaccharide 4'-kinase, found in Leptothrix cholodnii (strain ATCC 51168 / LMG 8142 / SP-6) (Leptothrix discophora (strain SP-6)).